A 196-amino-acid chain; its full sequence is Imidazoleglycerol-phosphate dehydratase (196 aa).

The protein belongs to the imidazoleglycerol-phosphate dehydratase family.

It localises to the cytoplasm. The enzyme catalyses D-erythro-1-(imidazol-4-yl)glycerol 3-phosphate = 3-(imidazol-4-yl)-2-oxopropyl phosphate + H2O. The protein operates within amino-acid biosynthesis; L-histidine biosynthesis; L-histidine from 5-phospho-alpha-D-ribose 1-diphosphate: step 6/9. The sequence is that of Imidazoleglycerol-phosphate dehydratase from Lachnoclostridium phytofermentans (strain ATCC 700394 / DSM 18823 / ISDg) (Clostridium phytofermentans).